The following is an 843-amino-acid chain: Speckle targeted PIP5K1A-regulated poly(A) polymerase (843 aa).

The Matrin-type zinc finger occupies 25-55 (FRCLLCGVNIPNRPSLTDHLSGRRHVRLHEE). The RRM domain occupies 54–126 (EERDKRNQQQ…ALEEPQIKLS (73 aa)). Over residues 134-146 (PREKKEFQRKKGG) the composition is skewed to basic residues. A disordered region spans residues 134 to 157 (PREKKEFQRKKGGSPRTLQPPDPE). Ser-215 lines the ATP pocket. Mg(2+) is bound by residues Asp-226 and Asp-228. UTP-binding residues include Asp-226 and Asp-228. The segment covering 241 to 255 (VEGKAEKEIQNREES) has biased composition (basic and acidic residues). Residues 241–292 (VEGKAEKEIQNREESSTDMEVSMEDPETERKEEEMEIGNSKNDEDEDVTPGL) are disordered. Asn-354 contacts ATP. Residues Asn-354, Arg-376, Tyr-398, and His-516 each contribute to the UTP site. Residues 456–516 (SLSSLLSEFF…NIQDPFELSH (61 aa)) enclose the PAP-associated domain. The segment at 564–837 (PPTERECVGR…YLPRMVAQIQ (274 aa)) is KA1; binds the bulging loops of U6 snRNA but is dispensable for terminal uridylyltransferase activity. Residues 653–691 (QNNTKEASKQKSIFKTEEGMTESARRKREMTEPCMSDMT) are disordered. Positions 658–670 (EASKQKSIFKTEE) are enriched in basic and acidic residues.

The protein belongs to the DNA polymerase type-B-like family. As to quaternary structure, associates with the cleavage and polyadenylation specificity factor (CPSF) complex. Mg(2+) is required as a cofactor. Mn(2+) serves as cofactor.

The protein resides in the nucleus. It localises to the nucleolus. The protein localises to the nucleus speckle. It catalyses the reaction RNA(n) + UTP = RNA(n)-3'-uridine ribonucleotide + diphosphate. It carries out the reaction RNA(n) + ATP = RNA(n)-3'-adenine ribonucleotide + diphosphate. Its function is as follows. Poly(A) polymerase that creates the 3'-poly(A) tail of specific pre-mRNAs. In addition to polyadenylation, it is also required for the 3'-end cleavage of pre-mRNAs: binds to the 3'UTR of targeted pre-mRNAs and promotes the recruitment and assembly of the CPSF complex on the 3'UTR of pre-mRNAs. In addition to adenylyltransferase activity, also has uridylyltransferase activity. However, the ATP ratio is higher than UTP in cells, suggesting that it functions primarily as a poly(A) polymerase. The protein is Speckle targeted PIP5K1A-regulated poly(A) polymerase (tut1) of Xenopus tropicalis (Western clawed frog).